We begin with the raw amino-acid sequence, 106 residues long: Urease subunit beta (106 aa).

This sequence belongs to the urease beta subunit family. As to quaternary structure, heterotrimer of UreA (gamma), UreB (beta) and UreC (alpha) subunits. Three heterotrimers associate to form the active enzyme.

Its subcellular location is the cytoplasm. It catalyses the reaction urea + 2 H2O + H(+) = hydrogencarbonate + 2 NH4(+). Its pathway is nitrogen metabolism; urea degradation; CO(2) and NH(3) from urea (urease route): step 1/1. The chain is Urease subunit beta from Acinetobacter baumannii (strain SDF).